A 243-amino-acid chain; its full sequence is Probable transcriptional regulatory protein PTH_1024 (243 aa).

Belongs to the TACO1 family.

The protein resides in the cytoplasm. The chain is Probable transcriptional regulatory protein PTH_1024 from Pelotomaculum thermopropionicum (strain DSM 13744 / JCM 10971 / SI).